The sequence spans 258 residues: PF03932 family protein CutC (258 aa).

This sequence belongs to the CutC family.

It localises to the cytoplasm. The protein is PF03932 family protein CutC of Mesorhizobium japonicum (strain LMG 29417 / CECT 9101 / MAFF 303099) (Mesorhizobium loti (strain MAFF 303099)).